The chain runs to 247 residues: Enolase-phosphatase E1 (247 aa).

Residues D12 and E14 each contribute to the Mg(2+) site. Substrate-binding positions include 141 to 142 (SS) and K175. Position 200 (D200) interacts with Mg(2+).

This sequence belongs to the HAD-like hydrolase superfamily. MasA/MtnC family. Monomer. The cofactor is Mg(2+).

The protein localises to the cytoplasm. The protein resides in the nucleus. The enzyme catalyses 5-methylsulfanyl-2,3-dioxopentyl phosphate + H2O = 1,2-dihydroxy-5-(methylsulfanyl)pent-1-en-3-one + phosphate. It functions in the pathway amino-acid biosynthesis; L-methionine biosynthesis via salvage pathway; L-methionine from S-methyl-5-thio-alpha-D-ribose 1-phosphate: step 3/6. The protein operates within amino-acid biosynthesis; L-methionine biosynthesis via salvage pathway; L-methionine from S-methyl-5-thio-alpha-D-ribose 1-phosphate: step 4/6. Its function is as follows. Bifunctional enzyme that catalyzes the enolization of 2,3-diketo-5-methylthiopentyl-1-phosphate (DK-MTP-1-P) into the intermediate 2-hydroxy-3-keto-5-methylthiopentenyl-1-phosphate (HK-MTPenyl-1-P), which is then dephosphorylated to form the acireductone 1,2-dihydroxy-3-keto-5-methylthiopentene (DHK-MTPene). The sequence is that of Enolase-phosphatase E1 from Drosophila willistoni (Fruit fly).